Consider the following 374-residue polypeptide: N-acetyldiaminopimelate deacetylase (374 aa).

Aspartate 69 is a catalytic residue. The Proton acceptor role is filled by glutamate 128.

Belongs to the peptidase M20A family. N-acetyldiaminopimelate deacetylase subfamily.

It catalyses the reaction N-acetyl-(2S,6S)-2,6-diaminopimelate + H2O = (2S,6S)-2,6-diaminopimelate + acetate. It participates in amino-acid biosynthesis; L-lysine biosynthesis via DAP pathway; LL-2,6-diaminopimelate from (S)-tetrahydrodipicolinate (acetylase route): step 3/3. Functionally, catalyzes the conversion of N-acetyl-diaminopimelate to diaminopimelate and acetate. The protein is N-acetyldiaminopimelate deacetylase (ykuR) of Bacillus subtilis (strain 168).